The chain runs to 480 residues: MDSREFRRRGKEMVDYIADYLDGIEGRPVYPDVEPGYLRPLIPATAPQEPETYEDIIKDIEKIIMPGVTHWHSPYFFAYFPTASSYPAMLADMLCGAIGCIGFSWAASPACTELETVMMDWLGKMLELPEAFLAGRAGEGGGVIQGSASEATLVALLAARTKVIRQLQAASPEFTQAAIMEKLVAYTSDQAHSSVERAGLIGGIKLKAVPSDGNFSMRASALREALERDKAAGLIPFFVVATLGTTSCCSFDNLLEVGPICNQEGVWLHIDAAYAGSAFICPEFRYLLNGVEFADSFNFNPHKWLLVNFDCSAMWVKRRTDLTGAFNMDPVYLKHSHQDSGFITDYRHWQIPLGRRFRSLKMWFVFRMYGVKGLQAYIRKHVELSHEFESLVRQDPRFEICTEVILGLVCFRLKGSNELNETLLQRINSAKKIHLVPCRLRDKFVLRFAVCARTVESAHVQLAWEHISDLASSVLRAEKE.

Met1 bears the N-acetylmethionine mark. Tandem repeats lie at residues Lys58–Glu115 and Met118–Ala178. The segment at Lys58 to Ala178 is 2 X approximate tandem repeats. Residue Thr82 participates in substrate binding. Residues Ala148 and Ser149 each contribute to the pyridoxal 5'-phosphate site. His192 contributes to the substrate binding site. Pyridoxal 5'-phosphate contacts are provided by Thr246 and Asn300. N6-(pyridoxal phosphate)lysine is present on Lys303.

This sequence belongs to the group II decarboxylase family. Homodimer. Pyridoxal 5'-phosphate is required as a cofactor.

It catalyses the reaction L-dopa + H(+) = dopamine + CO2. It carries out the reaction 5-hydroxy-L-tryptophan + H(+) = serotonin + CO2. The protein operates within catecholamine biosynthesis; dopamine biosynthesis; dopamine from L-tyrosine: step 2/2. In terms of biological role, catalyzes the decarboxylation of L-3,4-dihydroxyphenylalanine (DOPA) to dopamine and L-5-hydroxytryptophan to serotonin. This chain is Aromatic-L-amino-acid decarboxylase (Ddc), found in Mus musculus (Mouse).